A 620-amino-acid polypeptide reads, in one-letter code: Chaperone protein HscA homolog (620 aa).

It belongs to the heat shock protein 70 family.

Its function is as follows. Chaperone involved in the maturation of iron-sulfur cluster-containing proteins. Has a low intrinsic ATPase activity which is markedly stimulated by HscB. This Pseudomonas savastanoi pv. phaseolicola (strain 1448A / Race 6) (Pseudomonas syringae pv. phaseolicola (strain 1448A / Race 6)) protein is Chaperone protein HscA homolog.